We begin with the raw amino-acid sequence, 686 residues long: Lysophospholipase 3 (686 aa).

The N-terminal stretch at 1-26 (MIRPLCSKIIISYIFAISQFLLAANA) is a signal peptide. The region spanning 39–592 (SCPDDINLVR…KNYCWNGTLD (554 aa)) is the PLA2c domain. N-linked (GlcNAc...) asparagine glycosylation is found at asparagine 56, asparagine 82, asparagine 129, asparagine 166, asparagine 221, asparagine 283, asparagine 313, asparagine 351, asparagine 495, asparagine 519, asparagine 547, asparagine 571, asparagine 588, and asparagine 614. Asparagine 659 is lipidated: GPI-anchor amidated asparagine. Positions 660–686 (SGSHLSGISVKFSAMIMLTLLMFTGAV) are cleaved as a propeptide — removed in mature form.

This sequence belongs to the lysophospholipase family.

The protein resides in the cell membrane. The catalysed reaction is a 1-acyl-sn-glycero-3-phosphocholine + H2O = sn-glycerol 3-phosphocholine + a fatty acid + H(+). Its function is as follows. Sequentially removes both fatty acyl groups from diacylglycerophospholipids and therefore has both phospholipase A and lysophospholipase activities. Substrate preference is phosphatidylserine &gt; phosphatidylinositol. Does not cleave phosphatidylcholine, phosphatidylethanolamine, phosphatidic acid and phosphatidylinositol-bisphosphate. Mainly responsible for the degradation of phosphatidylinositol in vivo. This chain is Lysophospholipase 3 (PLB3), found in Saccharomyces cerevisiae (strain ATCC 204508 / S288c) (Baker's yeast).